The following is a 466-amino-acid chain: Asparagine--tRNA ligase (466 aa).

Belongs to the class-II aminoacyl-tRNA synthetase family. Homodimer.

Its subcellular location is the cytoplasm. The enzyme catalyses tRNA(Asn) + L-asparagine + ATP = L-asparaginyl-tRNA(Asn) + AMP + diphosphate + H(+). The sequence is that of Asparagine--tRNA ligase from Colwellia psychrerythraea (strain 34H / ATCC BAA-681) (Vibrio psychroerythus).